Reading from the N-terminus, the 889-residue chain is Coatomer subunit beta' (889 aa).

6 WD repeats span residues 11-41 (NRSDRVKGIDFHPTEPWVLTTLYSGRVELWN), 53-83 (VTETPVRAGKFIARKNWIIVGSDDFRIRVFN), 95-125 (AHPDYIRSIAVHPTKPYVLSGSDDLTVKLWN), 138-169 (GHEHFVMCVAFNPKDPSTFASGCLDRTVKVWS), 182-214 (GQERGVNYVDYYPLPDKPYMITASDDLTIKIWD), and 226-256 (GHMSNVSFAVFHPTLPIIISGSEDGTLKIWN). Phosphoserine is present on Ser326. The interval 806 to 889 (CGAEGLPGSS…AVPEPVEEES (84 aa)) is disordered. The span at 836 to 864 (DENKEAEVEDSEFKESNSEAVEAEKKEEE) shows a compositional bias: basic and acidic residues. A compositionally biased stretch (low complexity) spans 866 to 879 (PQQQQSEQQPEQGE).

It belongs to the WD repeat COPB2 family. Oligomeric complex that consists of at least the alpha, beta, beta', gamma, delta, epsilon and zeta subunits. Interacts with the ESCRT-0 subunit VPS27.

The protein localises to the cytoplasm. It localises to the golgi apparatus membrane. Its subcellular location is the cytoplasmic vesicle. The protein resides in the COPI-coated vesicle membrane. In terms of biological role, the coatomer is a cytosolic protein complex that binds to dilysine motifs and reversibly associates with Golgi non-clathrin-coated vesicles, which further mediate biosynthetic protein transport from the ER, via the Golgi up to the trans Golgi network. Coatomer complex is required for budding from Golgi membranes, and is essential for the retrograde Golgi-to-ER transport of dilysine-tagged proteins. The chain is Coatomer subunit beta' (SEC27) from Saccharomyces cerevisiae (strain ATCC 204508 / S288c) (Baker's yeast).